A 139-amino-acid polypeptide reads, in one-letter code: ATP synthase epsilon chain, chloroplastic (139 aa).

Belongs to the ATPase epsilon chain family. In terms of assembly, F-type ATPases have 2 components, CF(1) - the catalytic core - and CF(0) - the membrane proton channel. CF(1) has five subunits: alpha(3), beta(3), gamma(1), delta(1), epsilon(1). CF(0) has three main subunits: a, b and c.

It is found in the plastid. Its subcellular location is the chloroplast thylakoid membrane. Produces ATP from ADP in the presence of a proton gradient across the membrane. In Dictyota dichotoma, this protein is ATP synthase epsilon chain, chloroplastic.